The following is a 317-amino-acid chain: Cold tolerance protein 1 (317 aa).

Belongs to the CTO1 family.

Its function is as follows. Protein required for cold tolerance. Plays a role in the regulation of phosphate uptake. The chain is Cold tolerance protein 1 from Saccharomyces cerevisiae (strain ATCC 204508 / S288c) (Baker's yeast).